The primary structure comprises 99 residues: uncharacterized protein (99 aa).

It belongs to the HesB/IscA family.

This is an uncharacterized protein from Staphylococcus haemolyticus (strain JCSC1435).